We begin with the raw amino-acid sequence, 337 residues long: Glycine N(alpha)-acyltransferase (337 aa).

The protein belongs to the acetyltransferase family.

The enzyme catalyses a (3R)-hydroxyacyl-[ACP] + glycine = a lyso-glycine lipid + holo-[ACP] + H(+). It catalyses the reaction (3R)-hydroxyhexadecanoyl-[ACP] + glycine = N-[(3R)-3-hydroxyhexadecanoyl]-glycine + holo-[ACP] + H(+). It functions in the pathway lipid metabolism. Is involved in the production of glycine lipids (GL), which are phosphorus-free membrane lipids important for fitness during growth of the human gut bacterium B.thetaiotaomicron in vivo and in vitro. Catalyzes the first step of GL biosynthesis, i.e. the N-acylation of glycine via addition of a 3-hydroxy fatty acyl group, to form a range of monoacylated glycine (also named lyso-glycine lipids or lyso-GL). Is important for the ability of B.thetaiotaomicron to adapt to stress and colonize the mammalian gut. Also seems to be required for the production of flavolipin, an acylated serine-glycine dipeptide. The protein is Glycine N(alpha)-acyltransferase of Bacteroides thetaiotaomicron (strain ATCC 29148 / DSM 2079 / JCM 5827 / CCUG 10774 / NCTC 10582 / VPI-5482 / E50).